The chain runs to 407 residues: Imidazolonepropionase (407 aa).

The Fe(3+) site is built by H75 and H77. The Zn(2+) site is built by H75 and H77. Residues R84, Y147, and H180 each coordinate 4-imidazolone-5-propanoate. Y147 provides a ligand contact to N-formimidoyl-L-glutamate. Residue H245 participates in Fe(3+) binding. H245 lines the Zn(2+) pocket. Q248 serves as a coordination point for 4-imidazolone-5-propanoate. D320 contributes to the Fe(3+) binding site. D320 is a Zn(2+) binding site. N-formimidoyl-L-glutamate contacts are provided by N322 and G324. S325 is a 4-imidazolone-5-propanoate binding site.

It belongs to the metallo-dependent hydrolases superfamily. HutI family. It depends on Zn(2+) as a cofactor. Fe(3+) is required as a cofactor.

The protein resides in the cytoplasm. The catalysed reaction is 4-imidazolone-5-propanoate + H2O = N-formimidoyl-L-glutamate. Its pathway is amino-acid degradation; L-histidine degradation into L-glutamate; N-formimidoyl-L-glutamate from L-histidine: step 3/3. Catalyzes the hydrolytic cleavage of the carbon-nitrogen bond in imidazolone-5-propanoate to yield N-formimidoyl-L-glutamate. It is the third step in the universal histidine degradation pathway. This Pseudoalteromonas atlantica (strain T6c / ATCC BAA-1087) protein is Imidazolonepropionase.